Here is a 476-residue protein sequence, read N- to C-terminus: Lactate utilization protein B (476 aa).

2 consecutive 4Fe-4S ferredoxin-type domains span residues 304–334 (GGEF…GHTY) and 353–382 (YDDF…LHQL). [4Fe-4S] cluster contacts are provided by Cys313, Cys316, Cys319, Cys323, Cys366, Cys369, and Cys373. The segment at 452-476 (RDFPAPNKNSFRNWMKHRTKGDEES) is disordered.

It belongs to the LutB/YkgF family.

Is involved in L-lactate degradation and allows cells to grow with lactate as the sole carbon source. Has probably a role as an electron transporter during oxidation of L-lactate. This Lysinibacillus sphaericus (strain C3-41) protein is Lactate utilization protein B.